The chain runs to 363 residues: Spore germination protein YndE (363 aa).

10 consecutive transmembrane segments (helical) span residues 8–28 (ITTA…GVLT), 41–61 (DGWI…MIIA), 84–104 (LGHL…AFEV), 113–133 (FFLL…WIGL), 149–169 (MIFP…LGIF), 189–209 (VKTT…VAFM), 218–238 (AVVI…IMVI), 273–293 (FLLV…FYAA), 305–325 (PLSC…MPKN), and 335–355 (TVSH…LVIS).

This sequence belongs to the amino acid-polyamine-organocation (APC) superfamily. Spore germination protein (SGP) (TC 2.A.3.9) family.

The protein localises to the cell membrane. Its function is as follows. Involved in the germinative response to L-alanine. Could be an amino acid transporter. The sequence is that of Spore germination protein YndE (yndE) from Bacillus subtilis (strain 168).